A 103-amino-acid chain; its full sequence is Stefin-2 (103 aa).

The Secondary area of contact motif lies at 52–56 (QVVQG).

It belongs to the cystatin family.

The protein localises to the cytoplasm. Functionally, this is an intracellular thiol proteinase inhibitor. The polypeptide is Stefin-2 (Stfa2) (Mus musculus (Mouse)).